We begin with the raw amino-acid sequence, 872 residues long: G-type lectin S-receptor-like serine/threonine-protein kinase At5g24080 (872 aa).

The signal sequence occupies residues methionine 1–alanine 25. Over threonine 26–lysine 472 the chain is Extracellular. A Bulb-type lectin domain is found at isoleucine 30–glutamine 149. N-linked (GlcNAc...) asparagine glycans are attached at residues asparagine 49, asparagine 117, asparagine 208, asparagine 219, asparagine 261, and asparagine 294. The 39-residue stretch at valine 306 to glutamine 344 folds into the EGF-like; atypical domain. 2 disulfide bridges follow: cysteine 310–cysteine 321 and cysteine 316–cysteine 332. 3 N-linked (GlcNAc...) asparagine glycosylation sites follow: asparagine 353, asparagine 367, and asparagine 390. In terms of domain architecture, PAN spans cysteine 360–arginine 447. Cystine bridges form between cysteine 400-cysteine 424 and cysteine 404-cysteine 410. Residues asparagine 449 and asparagine 459 are each glycosylated (N-linked (GlcNAc...) asparagine). A helical membrane pass occupies residues valine 473 to leucine 493. Residues tyrosine 494 to arginine 872 are Cytoplasmic-facing. Phosphothreonine is present on threonine 521. Residues asparagine 530 to leucine 810 form the Protein kinase domain. ATP is bound by residues leucine 536 to valine 544 and lysine 558. Residue tyrosine 603 is modified to Phosphotyrosine. The segment at glutamate 619–threonine 637 is caM-binding. The Proton acceptor role is filled by aspartate 656. Phosphothreonine occurs at positions 690 and 695.

Belongs to the protein kinase superfamily. Ser/Thr protein kinase family.

Its subcellular location is the cell membrane. The enzyme catalyses L-seryl-[protein] + ATP = O-phospho-L-seryl-[protein] + ADP + H(+). It carries out the reaction L-threonyl-[protein] + ATP = O-phospho-L-threonyl-[protein] + ADP + H(+). The polypeptide is G-type lectin S-receptor-like serine/threonine-protein kinase At5g24080 (Arabidopsis thaliana (Mouse-ear cress)).